Here is a 308-residue protein sequence, read N- to C-terminus: MVPSQSHPAKTPRKQLKPPIEAVQSHYDRSNEFFKLWLDPSMTYSCAYFERPDLTLEEAQRAKRDLALSKLGLEPGMTLLDIGCGWGSTMLHAIEKYDVNVIGLTLSANQLAHNKLKFAEIDHTRTDRTKDVRLQGWEQFDEPVDRIISLGAFEHFADGAGDAGFERYDSFFKMCYDVLPDDGRMLLHTIIVPDAKETKELGLTTPMSLLRFIKFILTEIFPGGRLPKISQVDHYSSNAGFTVERYHRIGSHYVPTLNAWAAALEAHKDEAIALQGRQIYDTYMHYLTGCSDLFRDRYTDVCQFTLVK.

S-adenosyl-L-methionine contacts are provided by residues 44–45 (YS), 79–87 (LLDIGCGWG), 105–110 (TLSANQ), and 137–138 (WE). Cysteine 290 is an active-site residue.

Belongs to the CFA/CMAS family. As to quaternary structure, homodimer.

The protein localises to the cytoplasm. The enzyme catalyses a 1-acyl-2-(9Z)-enoyl-sn-glycero-3-phospholipid + S-adenosyl-L-methionine = a 1-acyl-2-(9-cyclopronane)-acyl-sn-glycero-3-phospholipid + S-adenosyl-L-homocysteine + H(+). It functions in the pathway lipid metabolism; mycolic acid biosynthesis. Functionally, catalyzes the formation of trans cyclopropanated ketomycolate or methoxymycolate through the conversion of a double bond to a cyclopropane ring at the proximal position of an oxygenated mycolic acid via the transfer of a methylene group from S-adenosyl-L-methionine. In the absence of MmaA2, CmaA2 has a non-specific cis-cyclopropanating activity and is able to catalyze the conversion of a double bond to a cis cyclopropane ring at the distal position of an alpha mycolic acid. Cyclopropanated mycolic acids are key factors participating in cell envelope permeability, host immunomodulation and persistence. This chain is Cyclopropane mycolic acid synthase 2 (cmaA2), found in Mycobacterium leprae (strain TN).